We begin with the raw amino-acid sequence, 72 residues long: uncharacterized protein (72 aa).

It belongs to the asfivirus I73R family.

It localises to the virion. This is an uncharacterized protein from African swine fever virus (isolate Warthog/Namibia/Wart80/1980) (ASFV).